The sequence spans 321 residues: MAVARHGCPPWGSILGLLVLALAAAAAWDVSFLRCSLGSFCECDFWPDLPGLECDLARHLAGQHLAKALVVKSLKAFVQDPAPSKPLVLSLHGWTGTGKSYVSSLLAQYLFRGGLRSPHVHHFSPIIHFPHPSHTEQYKNELKSWVQGNLTACGRSLFLFDEMDKLPPGLMEVLKPFLGPSWVVYGTNYRKAIFIFISNTGGEQINQVALEAWRSRRDREEISLQEVEPAVSQAVLDNPHHGFWRSGIMEEQLLDAVVPFLPLQRHHVRHCVLNELAQLGLEPREEVVQAVLDSTTYFPEEEQLFSSNGCKTVASRITFFL.

The signal sequence occupies residues 1–27 (MAVARHGCPPWGSILGLLVLALAAAAA). Residue 93–100 (GWTGTGKS) participates in ATP binding. Asparagine 149 is a glycosylation site (N-linked (GlcNAc...) asparagine).

It belongs to the ClpA/ClpB family. Torsin subfamily. In terms of assembly, homohexamer. Interacts with TOR1AIP1.

The protein resides in the endoplasmic reticulum lumen. In Rattus norvegicus (Rat), this protein is Torsin-2A (Tor2a).